A 250-amino-acid chain; its full sequence is Aquaporin TIP2-1 (250 aa).

N-acetylmethionine is present on M1. Topologically, residues 1–20 (MAGVAFGSFDDSFSLASLRA) are cytoplasmic. A2 carries the post-translational modification N-acetylalanine; in Aquaporin TIP2-1, N-terminally processed. A helical membrane pass occupies residues 21–41 (YLAEFISTLLFVFAGVGSAIA). Over 42-54 (YAKLTSDAALDTP) the chain is Vacuolar. A helical membrane pass occupies residues 55–75 (GLVAIAVCHGFALFVAVAIGA). Over 76–98 (NISGGHVNPAVTFGLAVGGQITV) the chain is Cytoplasmic. An NPA 1 motif is present at residues 83 to 85 (NPA). A helical transmembrane segment spans residues 99-119 (ITGVFYWIAQLLGSTAACFLL). Topologically, residues 120-141 (KYVTGGLAVPTHSVAAGLGSIE) are vacuolar. The helical transmembrane segment at 142–162 (GVVMEIIITFALVYTVYATAA) threads the bilayer. Topologically, residues 163–168 (DPKKGS) are cytoplasmic. A helical membrane pass occupies residues 169 to 189 (LGTIAPLAIGLIVGANILAAG). At 190 to 215 (PFSGGSMNPARSFGPAVAAGDFSGHW) the chain is on the vacuolar side. The NPA 2 motif lies at 197–199 (NPA). Residues 216–236 (VYWVGPLIGGGLAGLIYGNVF) form a helical membrane-spanning segment. Over 237–250 (MGSSEHVPLASADF) the chain is Cytoplasmic.

This sequence belongs to the MIP/aquaporin (TC 1.A.8) family. TIP (TC 1.A.8.10) subfamily. As to quaternary structure, interacts with cucumber mosaic virus (CMV) Protein 1a. As to expression, strongly expressed in shoot, rosette, bolt and flowers. Also expressed in roots, flower buds and above ground.

Its subcellular location is the vacuole membrane. Its function is as follows. Aquaporin required to facilitate the transport of water from the vacuolar compartment to the cytoplasm. Does not promote glycerol permeability. Its function is impaired by Hg(2+). Transports urea in yeast cells and Xenopus laevis oocytes in a pH-independent manner. Transports methylammonium or ammonium in yeast cells and Xenopus laevis oocytes, preferentially at high medium pH. May participate in vacuolar compartmentation and detoxification of ammonium. This chain is Aquaporin TIP2-1 (TIP2-1), found in Arabidopsis thaliana (Mouse-ear cress).